Consider the following 438-residue polypeptide: Acid phosphatase type 7 (438 aa).

A signal peptide spans 1 to 26; it reads MHPLPGYWSCYCLLLLFSLGVQGSLG. 3 residues coordinate Fe cation: D141, D170, and Y173. Residue D170 coordinates Zn(2+). N205 is a Zn(2+) binding site. N211 carries an N-linked (GlcNAc...) asparagine glycan. H286 and H333 together coordinate Zn(2+). Fe cation is bound at residue H335. N-linked (GlcNAc...) asparagine glycosylation is found at N350 and N404.

It belongs to the metallophosphoesterase superfamily. Purple acid phosphatase family. It depends on Fe cation as a cofactor. Zn(2+) is required as a cofactor.

It localises to the secreted. The catalysed reaction is a phosphate monoester + H2O = an alcohol + phosphate. In Homo sapiens (Human), this protein is Acid phosphatase type 7.